The chain runs to 361 residues: UDP-N-acetylglucosamine--N-acetylmuramyl-(pentapeptide) pyrophosphoryl-undecaprenol N-acetylglucosamine transferase (361 aa).

Residues 13–15, N125, R167, S196, I251, 270–275, and Q296 each bind UDP-N-acetyl-alpha-D-glucosamine; these read TGG and ALTVTE.

The protein belongs to the glycosyltransferase 28 family. MurG subfamily.

The protein localises to the cell inner membrane. It carries out the reaction di-trans,octa-cis-undecaprenyl diphospho-N-acetyl-alpha-D-muramoyl-L-alanyl-D-glutamyl-meso-2,6-diaminopimeloyl-D-alanyl-D-alanine + UDP-N-acetyl-alpha-D-glucosamine = di-trans,octa-cis-undecaprenyl diphospho-[N-acetyl-alpha-D-glucosaminyl-(1-&gt;4)]-N-acetyl-alpha-D-muramoyl-L-alanyl-D-glutamyl-meso-2,6-diaminopimeloyl-D-alanyl-D-alanine + UDP + H(+). It participates in cell wall biogenesis; peptidoglycan biosynthesis. Cell wall formation. Catalyzes the transfer of a GlcNAc subunit on undecaprenyl-pyrophosphoryl-MurNAc-pentapeptide (lipid intermediate I) to form undecaprenyl-pyrophosphoryl-MurNAc-(pentapeptide)GlcNAc (lipid intermediate II). The protein is UDP-N-acetylglucosamine--N-acetylmuramyl-(pentapeptide) pyrophosphoryl-undecaprenol N-acetylglucosamine transferase of Psychrobacter cryohalolentis (strain ATCC BAA-1226 / DSM 17306 / VKM B-2378 / K5).